Here is a 465-residue protein sequence, read N- to C-terminus: Clusterin-like protein 1 (465 aa).

An N-terminal signal peptide occupies residues 1-20; sequence MKPSLLVFTVYLLWLKDCHC. Residues 62–106 are a coiled coil; that stretch reads MMERREEEHTNLMKTLKKCKEEKQEALKLMNEVQEHLEEEESLCQ. Disulfide bonds link Cys105–Cys333, Cys116–Cys325, Cys119–Cys322, and Cys124–Cys315. N-linked (GlcNAc...) asparagine glycosylation is found at Asn196, Asn257, Asn285, Asn311, Asn351, Asn412, and Asn430.

Belongs to the clusterin family. In terms of tissue distribution, retina-specific (at protein level). In the light-adapted retina, expressed in the outer segment of cone photoreceptors. In the dark-adapted retina, strongly expressed in the outer plexiform layer in the region of contact between the cone pedicles and second order neurons with little or no expression in the cone photoreceptor outer segments.

The protein localises to the secreted. The chain is Clusterin-like protein 1 (CLUL1) from Canis lupus familiaris (Dog).